Reading from the N-terminus, the 525-residue chain is GMP synthase [glutamine-hydrolyzing] (525 aa).

The 199-residue stretch at 9 to 207 (RILILDFGSQ…ILDICECEAL (199 aa)) folds into the Glutamine amidotransferase type-1 domain. Cysteine 86 serves as the catalytic Nucleophile. Residues histidine 181 and glutamate 183 contribute to the active site. One can recognise a GMPS ATP-PPase domain in the interval 208-400 (WTPSKIAEDA…LGLPYDMVYR (193 aa)). Residue 235–241 (SGGVDSS) coordinates ATP.

Homodimer.

The enzyme catalyses XMP + L-glutamine + ATP + H2O = GMP + L-glutamate + AMP + diphosphate + 2 H(+). Its pathway is purine metabolism; GMP biosynthesis; GMP from XMP (L-Gln route): step 1/1. Functionally, catalyzes the synthesis of GMP from XMP. The sequence is that of GMP synthase [glutamine-hydrolyzing] from Pseudomonas fluorescens (strain SBW25).